Consider the following 177-residue polypeptide: 3-hydroxydecanoyl-[acyl-carrier-protein] dehydratase (177 aa).

The active site involves histidine 76.

It belongs to the thioester dehydratase family. FabA subfamily. In terms of assembly, homodimer.

It localises to the cytoplasm. It catalyses the reaction a (3R)-hydroxyacyl-[ACP] = a (2E)-enoyl-[ACP] + H2O. The catalysed reaction is (3R)-hydroxydecanoyl-[ACP] = (2E)-decenoyl-[ACP] + H2O. It carries out the reaction (2E)-decenoyl-[ACP] = (3Z)-decenoyl-[ACP]. The protein operates within lipid metabolism; fatty acid biosynthesis. Necessary for the introduction of cis unsaturation into fatty acids. Catalyzes the dehydration of (3R)-3-hydroxydecanoyl-ACP to E-(2)-decenoyl-ACP and then its isomerization to Z-(3)-decenoyl-ACP. Can catalyze the dehydratase reaction for beta-hydroxyacyl-ACPs with saturated chain lengths up to 16:0, being most active on intermediate chain length. The protein is 3-hydroxydecanoyl-[acyl-carrier-protein] dehydratase of Haemophilus influenzae (strain PittGG).